An 860-amino-acid chain; its full sequence is Leucine--tRNA ligase (860 aa).

Positions 42-52 match the 'HIGH' region motif; sequence PYPSGRLHMGH. A 'KMSKS' region motif is present at residues 619–623; it reads KMSKS. Lys-622 contributes to the ATP binding site.

It belongs to the class-I aminoacyl-tRNA synthetase family.

Its subcellular location is the cytoplasm. The catalysed reaction is tRNA(Leu) + L-leucine + ATP = L-leucyl-tRNA(Leu) + AMP + diphosphate. This chain is Leucine--tRNA ligase, found in Histophilus somni (strain 129Pt) (Haemophilus somnus).